Reading from the N-terminus, the 182-residue chain is Early nodulin-like protein 10 (182 aa).

A signal peptide spans Met-1–Gly-20. One can recognise a Phytocyanin domain in the interval Arg-21–Ser-125. Asn-65 carries an N-linked (GlcNAc...) asparagine glycan. A disulfide bridge links Cys-79 with Cys-113. Asn-129 and Asn-148 each carry an N-linked (GlcNAc...) asparagine glycan. Asn-157 is lipidated: GPI-anchor amidated asparagine. Positions Ala-158 to Val-182 are cleaved as a propeptide — removed in mature form.

This sequence belongs to the early nodulin-like (ENODL) family. As to expression, mostly expressed in flowers, and, to a lower extent, in leaves, but barely in seedlings, stems, seeds and roots.

The protein localises to the cell membrane. May act as a carbohydrate transporter. This chain is Early nodulin-like protein 10, found in Arabidopsis thaliana (Mouse-ear cress).